The chain runs to 447 residues: Signal recognition particle protein (447 aa).

Residues 108–115 (GLQGSGKT), 190–194 (DTAGR), and 248–251 (TKLD) each bind GTP.

The protein belongs to the GTP-binding SRP family. SRP54 subfamily. In terms of assembly, part of the signal recognition particle protein translocation system, which is composed of SRP and FtsY. Interacts with RNA.

It is found in the cytoplasm. It carries out the reaction GTP + H2O = GDP + phosphate + H(+). Functionally, involved in targeting and insertion of nascent membrane proteins into the cytoplasmic membrane. Binds to the hydrophobic signal sequence of the ribosome-nascent chain (RNC) as it emerges from the ribosomes. The SRP-RNC complex is then targeted to the cytoplasmic membrane where it interacts with the SRP receptor FtsY. The sequence is that of Signal recognition particle protein from Mycoplasma mycoides.